A 460-amino-acid polypeptide reads, in one-letter code: Cysteine--tRNA ligase (460 aa).

Cys-28 contacts Zn(2+). The 'HIGH' region signature appears at 30–40 (MTVYDYCHLGH). Zn(2+)-binding residues include Cys-209, His-234, and Glu-238. The 'KMSKS' region signature appears at 266–270 (KMSKS). Lys-269 contributes to the ATP binding site.

The protein belongs to the class-I aminoacyl-tRNA synthetase family. Monomer. Zn(2+) serves as cofactor.

Its subcellular location is the cytoplasm. The enzyme catalyses tRNA(Cys) + L-cysteine + ATP = L-cysteinyl-tRNA(Cys) + AMP + diphosphate. The chain is Cysteine--tRNA ligase from Pseudomonas putida (strain W619).